Here is a 471-residue protein sequence, read N- to C-terminus: UDP-N-acetylmuramate--L-alanine ligase (471 aa).

114 to 120 contributes to the ATP binding site; sequence GTHGKTT.

It belongs to the MurCDEF family.

The protein localises to the cytoplasm. It carries out the reaction UDP-N-acetyl-alpha-D-muramate + L-alanine + ATP = UDP-N-acetyl-alpha-D-muramoyl-L-alanine + ADP + phosphate + H(+). The protein operates within cell wall biogenesis; peptidoglycan biosynthesis. Cell wall formation. This is UDP-N-acetylmuramate--L-alanine ligase from Rhizobium etli (strain ATCC 51251 / DSM 11541 / JCM 21823 / NBRC 15573 / CFN 42).